Reading from the N-terminus, the 400-residue chain is Putative C-type lectin domain family 20 member A (400 aa).

Residues 1 to 20 form the signal peptide; the sequence is MLPRALLLSFCAAALQLVSS. C-type lectin domains lie at 26-131 and 159-275; these read LVKE…FLCY and ISGQ…FFCF. Disulfide bonds link Cys-40/Cys-130, Cys-105/Cys-122, Cys-180/Cys-274, and Cys-248/Cys-266. The tract at residues 287–346 is disordered; it reads ELPPLFHTSPTEMTEETTPRPGRAVASVGSGTDRRDTAAATEAQHLSSESKEKTSAQKSG.

The chain is Putative C-type lectin domain family 20 member A from Homo sapiens (Human).